The primary structure comprises 279 residues: Elongation factor Ts (279 aa).

The involved in Mg(2+) ion dislocation from EF-Tu stretch occupies residues 80–83 (TDFV).

Belongs to the EF-Ts family.

It is found in the cytoplasm. Associates with the EF-Tu.GDP complex and induces the exchange of GDP to GTP. It remains bound to the aminoacyl-tRNA.EF-Tu.GTP complex up to the GTP hydrolysis stage on the ribosome. The polypeptide is Elongation factor Ts (Borrelia garinii subsp. bavariensis (strain ATCC BAA-2496 / DSM 23469 / PBi) (Borreliella bavariensis)).